Reading from the N-terminus, the 1071-residue chain is SLIT-ROBO Rho GTPase-activating protein 2 (1071 aa).

Positions 22–325 (KEIRAQLTEQ…AVENLDATSD (304 aa)) constitute an F-BAR domain. Residues 181–203 (LKEAEKQEEKQIGKSVKQEDRQT) are compositionally biased toward basic and acidic residues. Positions 181–211 (LKEAEKQEEKQIGKSVKQEDRQTPRSPDSTA) are disordered. Residue S206 is modified to Phosphoserine. Positions 363-401 (QSELVQRCQQLQSRLSTLKIENEEVKKTMEATLQTIQDI) form a coiled coil. Phosphoserine occurs at positions 427, 500, 691, and 695. Residues 489–679 (ARRSSTVRKQ…TIIIQHENIF (191 aa)) form the Rho-GAP domain. Residues 700 to 726 (CDSTHGETTSAEDSTQDVTAEHHTSDD) form a disordered region. A compositionally biased stretch (polar residues) spans 705 to 717 (GETTSAEDSTQDV). S724 carries the post-translational modification Phosphoserine. The SH3 domain maps to 728-787 (CEPIEAIAKFDYVGRTARELSFKKGASLLLYQRASDDWWEGRHNGIDGLIPHQYIVVQDT). A Phosphoserine modification is found at S795. Disordered regions lie at residues 795 to 819 (SSPK…TGAS) and 838 to 918 (RKRP…DSPQ). Residues 855-868 (HGLGSSLTDSSSLG) are compositionally biased toward low complexity. Polar residues-rich tracts occupy residues 874 to 885 (RPSSQPIMSQNL) and 897 to 907 (GHGSLNSISRH). At S916 the chain carries Phosphoserine. R927 is modified (symmetric dimethylarginine; by PRMT5). A Phosphoserine modification is found at S930. Positions 940–968 (EVIAQDIEATMNSALNELQELERQSSAKH) form a coiled coil. The interval 984-1012 (PVVAPTSEPSSPLHTQLLKDPEPAFQRSA) is disordered. Phosphoserine is present on residues S990, S994, S1013, and S1027. The tract at residues 1029–1071 (KMAAPVKPPATRPKPTVFPKTNATSPGVNSSASPQATDKSCTV) is disordered. Residues 1047-1071 (PKTNATSPGVNSSASPQATDKSCTV) show a composition bias toward polar residues.

Homodimer. Forms a heterooligomer with SRGAP1 and SRGAP3 through its F-BAR domain. Interacts (via SH3 domain) with GPHN. Interacts (via SH3 domain) with FMNL1 (activated by RAC1); regulates the actin filament severing activity of FMNL1 and actin dynamics. Interacts (via SH3 domain) with FMNL3. Interacts with RAC1; specifically stimulates RAC1 GTPase activity. Interacts (via F-BAR domain) with HOMER1. Interacts with ROBO1 and ROBO2. Interacts with FASLG. Interacts with PRMT5. Methylation at Arg-927 is required for the stimulation of cell migration, dimerization and localization at the plasma membrane protrusions.

The protein localises to the cell membrane. Its subcellular location is the cell projection. It localises to the dendritic spine. It is found in the postsynaptic density. The protein resides in the postsynaptic cell membrane. The protein localises to the lamellipodium. Its subcellular location is the cytoplasmic vesicle. It localises to the phagosome. It is found in the nucleus. The protein resides in the cytoplasm. The protein localises to the cytosol. Its function is as follows. Postsynaptic RAC1 GTPase activating protein (GAP) that plays a key role in neuronal morphogenesis and migration mainly during development of the cerebral cortex. Regulates excitatory and inhibitory synapse maturation and density in cortical pyramidal neurons. SRGAP2/SRGAP2A limits excitatory and inhibitory synapse density through its RAC1-specific GTPase activating activity, while it promotes maturation of both excitatory and inhibitory synapses through its ability to bind to the postsynaptic scaffolding protein HOMER1 at excitatory synapses, and the postsynaptic protein GPHN at inhibitory synapses. Mechanistically, acts by binding and deforming membranes, thereby regulating actin dynamics to regulate cell migration and differentiation. Promotes cell repulsion and contact inhibition of locomotion: localizes to protrusions with curved edges and controls the duration of RAC1 activity in contact protrusions. In non-neuronal cells, may also play a role in cell migration by regulating the formation of lamellipodia and filopodia. This chain is SLIT-ROBO Rho GTPase-activating protein 2, found in Mus musculus (Mouse).